A 158-amino-acid polypeptide reads, in one-letter code: Lipoprotein signal peptidase (158 aa).

4 consecutive transmembrane segments (helical) span residues 7–27 (LFWI…YWVV), 38–58 (ILPG…FSLF), 67–87 (WLSL…PVLD), and 95–115 (GLIL…GYVV). Residues aspartate 116 and aspartate 132 contribute to the active site. The helical transmembrane segment at 125-145 (FAVFNMADSFISIGIVCLLLA) threads the bilayer.

Belongs to the peptidase A8 family.

The protein resides in the cell inner membrane. The catalysed reaction is Release of signal peptides from bacterial membrane prolipoproteins. Hydrolyzes -Xaa-Yaa-Zaa-|-(S,diacylglyceryl)Cys-, in which Xaa is hydrophobic (preferably Leu), and Yaa (Ala or Ser) and Zaa (Gly or Ala) have small, neutral side chains.. Its pathway is protein modification; lipoprotein biosynthesis (signal peptide cleavage). Functionally, this protein specifically catalyzes the removal of signal peptides from prolipoproteins. The sequence is that of Lipoprotein signal peptidase from Nostoc sp. (strain PCC 7120 / SAG 25.82 / UTEX 2576).